The chain runs to 248 residues: Ankyrin repeat domain-containing protein 45 (248 aa).

2 stretches are compositionally biased toward acidic residues: residues methionine 1–glutamate 10 and glutamate 22–glycine 33. The interval methionine 1 to threonine 42 is disordered. 2 ANK repeats span residues valine 75–glutamate 104 and arginine 108–alanine 137.

It is found in the cytoplasm. Its subcellular location is the midbody. The protein resides in the midbody ring. The protein localises to the cleavage furrow. In terms of biological role, may play a role during cell division. The polypeptide is Ankyrin repeat domain-containing protein 45 (Ankrd45) (Mus musculus (Mouse)).